A 45-amino-acid chain; its full sequence is Proteinase inhibitor IIA (45 aa).

3 disulfide bridges follow: Cys10–Cys24, Cys14–Cys35, and Cys20–Cys43.

The protein belongs to the protease inhibitor I20 (potato type II proteinase inhibitor) family.

The protein localises to the secreted. Its function is as follows. Inhibits trypsin strongly and chymotrypsin temporarily. This Solanum tuberosum (Potato) protein is Proteinase inhibitor IIA.